A 312-amino-acid chain; its full sequence is Malate dehydrogenase (312 aa).

NAD(+)-binding positions include 12–17 (GAGFTG) and Asp36. Substrate is bound by residues Arg87 and Arg93. NAD(+) contacts are provided by residues Asn100 and 123-125 (LTN). Asn125 contributes to the substrate binding site. Residue Ser149 is modified to Phosphoserine. Arg156 lines the substrate pocket. His180 functions as the Proton acceptor in the catalytic mechanism.

Belongs to the LDH/MDH superfamily. MDH type 3 family.

The catalysed reaction is (S)-malate + NAD(+) = oxaloacetate + NADH + H(+). Its function is as follows. Catalyzes the reversible oxidation of malate to oxaloacetate. This is Malate dehydrogenase from Bacillus cereus (strain ATCC 14579 / DSM 31 / CCUG 7414 / JCM 2152 / NBRC 15305 / NCIMB 9373 / NCTC 2599 / NRRL B-3711).